We begin with the raw amino-acid sequence, 286 residues long: Transcription initiation factor IIA large subunit (286 aa).

3 disordered regions span residues 120–145, 167–195, and 208–236; these read NTVEATNNSGATLNTNTSGNTNADVT, TVENIDDESEKKDDEEKEEDVEKTRKEKE, and KRSALLDTDEVGSELDDSDDDYLISEGEE. Residues 175–195 show a composition bias toward basic and acidic residues; it reads SEKKDDEEKEEDVEKTRKEKE. Positions 214–236 are enriched in acidic residues; that stretch reads DTDEVGSELDDSDDDYLISEGEE.

It belongs to the TFIIA subunit 1 family. As to quaternary structure, TFIIA is a heterodimer composed of the large TOA1 and a small TOA2 subunits. Interacts with KAP122.

The protein resides in the cytoplasm. It is found in the nucleus. Its function is as follows. TFIIA is a component of the transcription machinery of RNA polymerase II and implicated in the regulation of basal transcription. Interacts with TBP (the TATA-binding protein). This is Transcription initiation factor IIA large subunit (TOA1) from Saccharomyces cerevisiae (strain ATCC 204508 / S288c) (Baker's yeast).